Reading from the N-terminus, the 551-residue chain is Probable metalloreductase AIM14 (551 aa).

The next 7 helical transmembrane spans lie at 25 to 45 (GIII…VKFI), 67 to 87 (PTWM…GANI), 100 to 117 (RYGR…YLIL), 138 to 155 (KWLS…AIGY), 172 to 192 (FLNF…IVSI), 199 to 221 (YYSL…IIFH), and 225 to 247 (GVTI…LRFY). A Ferric oxidoreductase domain is found at 102-217 (GRIAYCLLPL…NITAWSMVVL (116 aa)). In terms of domain architecture, FAD-binding FR-type spans 247-369 (YKSYPVNNLK…GGSGISFGLP (123 aa)). Residues 440-492 (QDESHAKVEQTQGEEEVDGLLNQDENGIPLQSMKKESFPKKEEGEDEEKSSKD) form a disordered region. Basic and acidic residues predominate over residues 472-492 (MKKESFPKKEEGEDEEKSSKD).

The protein belongs to the ferric reductase (FRE) family. AIM14 subfamily.

The protein resides in the membrane. In terms of biological role, probable cell surface metalloreductase. May be involved in iron or copper homeostasis. The sequence is that of Probable metalloreductase AIM14 (AIM14) from Candida tropicalis (strain ATCC MYA-3404 / T1) (Yeast).